Reading from the N-terminus, the 45-residue chain is MTQRTLHGTVLKKVRTSGFRSRMATKAGRRVINARRRKGRAKLTV.

This sequence belongs to the bacterial ribosomal protein bL34 family.

It is found in the plastid. The protein localises to the chloroplast. The polypeptide is Large ribosomal subunit protein bL34c (Emiliania huxleyi (Coccolithophore)).